The primary structure comprises 366 residues: tRNA/tmRNA (uracil-C(5))-methyltransferase (366 aa).

S-adenosyl-L-methionine is bound by residues Q188, Y216, N221, E237, and D297. C322 functions as the Nucleophile in the catalytic mechanism. E356 acts as the Proton acceptor in catalysis.

Belongs to the class I-like SAM-binding methyltransferase superfamily. RNA M5U methyltransferase family. TrmA subfamily.

The catalysed reaction is uridine(54) in tRNA + S-adenosyl-L-methionine = 5-methyluridine(54) in tRNA + S-adenosyl-L-homocysteine + H(+). The enzyme catalyses uridine(341) in tmRNA + S-adenosyl-L-methionine = 5-methyluridine(341) in tmRNA + S-adenosyl-L-homocysteine + H(+). Functionally, dual-specificity methyltransferase that catalyzes the formation of 5-methyluridine at position 54 (m5U54) in all tRNAs, and that of position 341 (m5U341) in tmRNA (transfer-mRNA). This Histophilus somni (strain 129Pt) (Haemophilus somnus) protein is tRNA/tmRNA (uracil-C(5))-methyltransferase.